A 76-amino-acid chain; its full sequence is uncharacterized protein (76 aa).

The protein resides in the plastid. This is an uncharacterized protein from Euglena longa (Euglenophycean alga).